The primary structure comprises 174 residues: UPF0316 protein LMOf2365_1801 (174 aa).

The next 3 membrane-spanning stretches (helical) occupy residues 4–24 (GIFI…IYTV), 36–56 (LAAL…SLVL), and 62–82 (IANV…GMKI).

The protein belongs to the UPF0316 family.

The protein localises to the cell membrane. This chain is UPF0316 protein LMOf2365_1801, found in Listeria monocytogenes serotype 4b (strain F2365).